The following is a 385-amino-acid chain: Trans-enoyl reductase tasC (385 aa).

49–52 (VDTK) serves as a coordination point for NADP(+). 136 to 143 (NSWYTVAW) is a substrate binding site. NADP(+)-binding positions include 196-199 (SSST), 219-222 (SARN), and 284-285 (LD). 305-309 (GPELM) is a substrate binding site. 374-375 (VS) is an NADP(+) binding site.

This sequence belongs to the zinc-containing alcohol dehydrogenase family. As to quaternary structure, monomer.

It catalyses the reaction (2S,4S)-4-hydroxy-4-methylglutamate + 8 malonyl-CoA + 3 S-adenosyl-L-methionine + ATP + 8 NADPH + 11 H(+) = (2S)-3-[(2S)-3,5-dioxo-4-[(2E,4R,6R,8E,10E,12E)-4,6,12-trimethyltetradeca-2,8,10,12-tetraenoyl]pyrrolidin-2-yl]-2-hydroxy-2-methylpropanoate + AMP + 3 S-adenosyl-L-homocysteine + 8 CO2 + diphosphate + 8 NADP(+) + 8 CoA + 6 H2O. The catalysed reaction is (2S,4R)-4-hydroxy-4-methylglutamate + 8 malonyl-CoA + 3 S-adenosyl-L-methionine + ATP + 8 NADPH + 11 H(+) = (2R)-3-[(2S)-3,5-dioxo-4-[(2E,4R,6R,8E,10E,12E)-4,6,12-trimethyltetradeca-2,8,10,12-tetraenoyl]pyrrolidin-2-yl]-2-hydroxy-2-methylpropanoate + AMP + 3 S-adenosyl-L-homocysteine + 8 CO2 + diphosphate + 8 NADP(+) + 8 CoA + 6 H2O. It participates in secondary metabolite biosynthesis. Trans-enoyl reductase; part of the gene cluster that mediates the biosynthesis of the tetramic acids Sch210971 and Sch210972, potential anti-HIV fungal natural product that contain a decalin core. The PKS module of tasS together with the enoylreductase tasC catalyze the formation of the polyketide unit which is then conjugated to 4-hydroxyl-4-methyl glutamate (HMG) by the condensation domain of the tasS NRPS module. One unique structural feature of Sch210971 and Sch210972 is the tetramic acid motif proposed to be derived from the non-proteinogenic amino acid HMG, by a Dieckmann-type condensation catalyzed by the reductase domain of tasS. The aldolase tasA catalyzes the aldol condensation of 2 molecules of pyruvic acid to yield the intermediate 4-hydroxyl-4-methyl-2-oxoglutarate (HMOG), which can then be stereoselectively transaminated, may be by tasG, to form HMG. The Diels-Alderase tas3 then uses the Dieckmann product of tasS as substrate and catalyzes the Diels-Alder cycloaddition to form the decalin ring of Sch210971 and Sch210972. The sequence is that of Trans-enoyl reductase tasC from Hapsidospora irregularis.